A 149-amino-acid chain; its full sequence is Oligosaccharyltransferase complex subunit OSTC (149 aa).

Residues 1-32 (METLYRVPFLVLECPNLKLKKPPWLHMPSAMT) are Cytoplasmic-facing. A helical transmembrane segment spans residues 33–53 (VYALVVVSYFLITGGIIYDVI). Topologically, residues 54–83 (VEPPSVGSMTDEHGHQRPVAFLAYRVNGQY) are extracellular. Residues 84–104 (IMEGLASSFLFTMGGLGFIIL) form a helical membrane-spanning segment. Topologically, residues 105 to 117 (DRSNAPNIPKLNR) are cytoplasmic. Residues 118-138 (FLLLFIGFVCVLLSFFMARVF) form a helical membrane-spanning segment. Residues 139-149 (MRMKLPGYLMG) lie on the Extracellular side of the membrane.

It belongs to the OSTC family. Component of STT3A-containing oligosaccharyl transferase (OST-A) complex. STT3A-containing complex assembly occurs through the formation of 3 subcomplexes. Subcomplex 1 contains RPN1 and TMEM258, subcomplex 2 contains the STT3A-specific subunits STT3A, DC2/OSTC, and KCP2 as well as the core subunit OST4, and subcomplex 3 contains RPN2, DAD1, and OST48. The OST-A complex can form stable complexes with the Sec61 complex or with both the Sec61 and TRAP complexes. Interacts with PSEN1 and NCSTN; indicative for an association with the gamma-secretase complex.

Its subcellular location is the endoplasmic reticulum. It localises to the membrane. The protein operates within protein modification; protein glycosylation. Functionally, subunit of STT3A-containing oligosaccharyl transferase (OST-A) complex that catalyzes the initial transfer of a defined glycan (Glc(3)Man(9)GlcNAc(2) in eukaryotes) from the lipid carrier dolichol-pyrophosphate to an asparagine residue within an Asn-X-Ser/Thr consensus motif in nascent polypeptide chains, the first step in protein N-glycosylation. N-glycosylation occurs cotranslationally and the complex associates with the Sec61 complex at the channel-forming translocon complex that mediates protein translocation across the endoplasmic reticulum (ER). Within the OST-A complex, acts as an adapter that anchors the OST-A complex to the Sec61 complex. May be involved in N-glycosylation of APP (amyloid-beta precursor protein). Can modulate gamma-secretase cleavage of APP by enhancing endoprotelysis of PSEN1. In Homo sapiens (Human), this protein is Oligosaccharyltransferase complex subunit OSTC.